Consider the following 71-residue polypeptide: Immune-induced peptide 18 (71 aa).

Positions 1-24 (MKLIALCCLLLLGLLGFLAAPGVA) are cleaved as a signal peptide. The propeptide occupies 25–26 (SP). Residues 26–71 (PSRHTGPGNGSGSGAGSGNPFRSPSSQQRPLYYDAPIGKPSKTMYA) form a disordered region. Over residues 32 to 42 (PGNGSGSGAGS) the composition is skewed to gly residues.

As to expression, hemolymph (at protein level).

It localises to the secreted. This is Immune-induced peptide 18 (IM18) from Drosophila melanogaster (Fruit fly).